The chain runs to 220 residues: Deoxyribose-phosphate aldolase (220 aa).

D89 serves as the catalytic Proton donor/acceptor. Catalysis depends on K151, which acts as the Schiff-base intermediate with acetaldehyde. K180 (proton donor/acceptor) is an active-site residue.

This sequence belongs to the DeoC/FbaB aldolase family. DeoC type 1 subfamily.

It localises to the cytoplasm. The enzyme catalyses 2-deoxy-D-ribose 5-phosphate = D-glyceraldehyde 3-phosphate + acetaldehyde. It functions in the pathway carbohydrate degradation; 2-deoxy-D-ribose 1-phosphate degradation; D-glyceraldehyde 3-phosphate and acetaldehyde from 2-deoxy-alpha-D-ribose 1-phosphate: step 2/2. Its function is as follows. Catalyzes a reversible aldol reaction between acetaldehyde and D-glyceraldehyde 3-phosphate to generate 2-deoxy-D-ribose 5-phosphate. The chain is Deoxyribose-phosphate aldolase from Lactococcus lactis subsp. cremoris (strain SK11).